We begin with the raw amino-acid sequence, 202 residues long: HTH-type transcriptional regulator BetI (202 aa).

The 61-residue stretch at 8–68 (PIRRRQLIDA…ATMRDITRQL (61 aa)) folds into the HTH tetR-type domain. The H-T-H motif DNA-binding region spans 31–50 (TIAQIARRAGVSAGIISHYF).

The protein operates within amine and polyamine biosynthesis; betaine biosynthesis via choline pathway [regulation]. Its function is as follows. Repressor involved in the biosynthesis of the osmoprotectant glycine betaine. It represses transcription of the choline transporter BetT and the genes of BetAB involved in the synthesis of glycine betaine. This Cronobacter sakazakii (strain ATCC BAA-894) (Enterobacter sakazakii) protein is HTH-type transcriptional regulator BetI.